The chain runs to 449 residues: Glucose-6-phosphate isomerase (449 aa).

Residue glutamate 291 is the Proton donor of the active site. Residues histidine 312 and lysine 426 contribute to the active site.

The protein belongs to the GPI family.

It is found in the cytoplasm. The enzyme catalyses alpha-D-glucose 6-phosphate = beta-D-fructose 6-phosphate. It functions in the pathway carbohydrate biosynthesis; gluconeogenesis. The protein operates within carbohydrate degradation; glycolysis; D-glyceraldehyde 3-phosphate and glycerone phosphate from D-glucose: step 2/4. Its function is as follows. Catalyzes the reversible isomerization of glucose-6-phosphate to fructose-6-phosphate. The chain is Glucose-6-phosphate isomerase from Streptococcus pyogenes serotype M12 (strain MGAS2096).